A 350-amino-acid polypeptide reads, in one-letter code: Anthranilate phosphoribosyltransferase (350 aa).

5-phospho-alpha-D-ribose 1-diphosphate is bound by residues G94, 97–98 (GS), T102, 104–107 (NVST), 122–130 (KHGNRSVSS), and S134. G94 provides a ligand contact to anthranilate. Residue S106 participates in Mg(2+) binding. N125 serves as a coordination point for anthranilate. Residue R180 coordinates anthranilate. Mg(2+)-binding residues include D239 and E240.

This sequence belongs to the anthranilate phosphoribosyltransferase family. As to quaternary structure, homodimer. Mg(2+) serves as cofactor.

It carries out the reaction N-(5-phospho-beta-D-ribosyl)anthranilate + diphosphate = 5-phospho-alpha-D-ribose 1-diphosphate + anthranilate. It participates in amino-acid biosynthesis; L-tryptophan biosynthesis; L-tryptophan from chorismate: step 2/5. Functionally, catalyzes the transfer of the phosphoribosyl group of 5-phosphorylribose-1-pyrophosphate (PRPP) to anthranilate to yield N-(5'-phosphoribosyl)-anthranilate (PRA). This chain is Anthranilate phosphoribosyltransferase, found in Geotalea uraniireducens (strain Rf4) (Geobacter uraniireducens).